The primary structure comprises 350 residues: GDSL esterase/lipase At2g42990 (350 aa).

The signal sequence occupies residues 1–24; that stretch reads MATHYLSPSILCIILTTLVSIAGA. The active-site Nucleophile is serine 35. N-linked (GlcNAc...) asparagine glycans are attached at residues asparagine 98, asparagine 117, and asparagine 141. Residues aspartate 325 and histidine 328 contribute to the active site.

This sequence belongs to the 'GDSL' lipolytic enzyme family.

The protein resides in the secreted. The protein is GDSL esterase/lipase At2g42990 of Arabidopsis thaliana (Mouse-ear cress).